A 251-amino-acid chain; its full sequence is MSDYVYNLVKKHHSVRKFKNKPLSEDVVKKLVEAGQSASTSSFLQAYSIIGIDDEKIKENLREVSGQPYVVENGYLFIFVIDYYRHHLVDQHAETDMENAYGSTEGLLVGAIDAALVAENIAVTAEDMGYGIVFLGSLRNDVERVREILDLPDYVFPVFGMAVGEPADDENGAAKPRLPFDHVFHHNKYHADKETQYAQMADYDQTISEYYDQRTNGNRKETWSQQIEMFLGNKARLDMLEQLQKSGLIQR.

It belongs to the flavin oxidoreductase frp family. It depends on FMN as a cofactor.

In terms of biological role, reduces FMN, organic nitro compounds and disulfide DTNB. Involved in maintenance of the cellular redox state and the disulfide stress response. This chain is NADPH-dependent oxidoreductase (nfrA), found in Staphylococcus aureus (strain bovine RF122 / ET3-1).